Reading from the N-terminus, the 95-residue chain is Small ribosomal subunit protein bS18 (95 aa).

This sequence belongs to the bacterial ribosomal protein bS18 family. As to quaternary structure, part of the 30S ribosomal subunit. Forms a tight heterodimer with protein bS6.

Binds as a heterodimer with protein bS6 to the central domain of the 16S rRNA, where it helps stabilize the platform of the 30S subunit. The chain is Small ribosomal subunit protein bS18 from Rickettsia prowazekii (strain Madrid E).